Reading from the N-terminus, the 234-residue chain is Interleukin-27 subunit alpha (234 aa).

Residues 1–28 (MGQVTGDLGWRLSLLLLPLLLVQAGSWG) form the signal peptide. N85 is a glycosylation site (N-linked (GlcNAc...) asparagine). Residues 160 to 185 (KEEEDKEEEEEEEEEEKKLPLGALGG) form a disordered region. The span at 161 to 174 (EEEDKEEEEEEEEE) shows a compositional bias: acidic residues.

It belongs to the IL-6 superfamily. In terms of assembly, heterodimer with EBI3; not disulfide-linked. This heterodimer is known as interleukin IL-27. In terms of processing, O-glycosylated. As to expression, expressed in macrophages and dendritic cells.

Its subcellular location is the secreted. Associates with EBI3 to form the IL-27 interleukin, a heterodimeric cytokine which functions in innate immunity. IL-27 has pro- and anti-inflammatory properties, that can regulate T-helper cell development, suppress T-cell proliferation, stimulate cytotoxic T-cell activity, induce isotype switching in B-cells, and that has diverse effects on innate immune cells. Among its target cells are CD4 T-helper cells which can differentiate in type 1 effector cells (TH1), type 2 effector cells (TH2) and IL17 producing helper T-cells (TH17). It drives rapid clonal expansion of naive but not memory CD4 T-cells. It also strongly synergizes with IL-12 to trigger interferon-gamma/IFN-gamma production of naive CD4 T-cells, binds to the cytokine receptor WSX-1/TCCR which appears to be required but not sufficient for IL-27-mediated signal transduction. IL-27 potentiate the early phase of TH1 response and suppress TH2 and TH17 differentiation. It induces the differentiation of TH1 cells via two distinct pathways, p38 MAPK/TBX21- and ICAM1/ITGAL/ERK-dependent pathways. It also induces STAT1, STAT3, STAT4 and STAT5 phosphorylation and activates TBX21/T-Bet via STAT1 with resulting IL12RB2 up-regulation, an event crucial to TH1 cell commitment. It suppresses the expression of GATA3, the inhibitor TH1 cells development. In CD8 T-cells, it activates STATs as well as GZMB. IL-27 reveals to be a potent inhibitor of TH17 cell development and of IL-17 production. Indeed IL27 alone is also able to inhibit the production of IL17 by CD4 and CD8 T-cells. While IL-27 suppressed the development of pro-inflammatory Th17 cells via STAT1, it inhibits the development of anti-inflammatory inducible regulatory T-cells, iTreg, independently of STAT1. IL-27 also has an effect on cytokine production, it suppresses pro-inflammatory cytokine production such as IL2, IL4, IL5 and IL6 and activates suppressors of cytokine signaling such as SOCS1 and SOCS3. Apart from suppression of cytokine production, IL-27 also antagonizes the effects of some cytokines such as IL6 through direct effects on T-cells. Another important role of IL-27 is its antitumor activity as well as its antiangiogenic activity with activation of production of antiangiogenic chemokines such as IP-10/CXCL10 and MIG/CXCL9. In Mus musculus (Mouse), this protein is Interleukin-27 subunit alpha (Il27).